Here is a 234-residue protein sequence, read N- to C-terminus: Phosphoribosylaminoimidazole-succinocarboxamide synthase (234 aa).

Belongs to the SAICAR synthetase family.

It carries out the reaction 5-amino-1-(5-phospho-D-ribosyl)imidazole-4-carboxylate + L-aspartate + ATP = (2S)-2-[5-amino-1-(5-phospho-beta-D-ribosyl)imidazole-4-carboxamido]succinate + ADP + phosphate + 2 H(+). It participates in purine metabolism; IMP biosynthesis via de novo pathway; 5-amino-1-(5-phospho-D-ribosyl)imidazole-4-carboxamide from 5-amino-1-(5-phospho-D-ribosyl)imidazole-4-carboxylate: step 1/2. This is Phosphoribosylaminoimidazole-succinocarboxamide synthase from Clostridium botulinum (strain Okra / Type B1).